The primary structure comprises 980 residues: Valine--tRNA ligase (980 aa).

The interval 1 to 40 is disordered; sequence MADKGCEAAQSKDSSAPGSGEPRPKTEKELERERQKAAKL. Residues 22-40 show a composition bias toward basic and acidic residues; sequence PRPKTEKELERERQKAAKL. A 'HIGH' region motif is present at residues 139-149; the sequence is PNVTGALHIGH. The 'KMSKS' region motif lies at 652 to 656; the sequence is KMSKS. Position 655 (Lys655) interacts with ATP.

This sequence belongs to the class-I aminoacyl-tRNA synthetase family.

It is found in the cytoplasm. The enzyme catalyses tRNA(Val) + L-valine + ATP = L-valyl-tRNA(Val) + AMP + diphosphate. This Schizosaccharomyces pombe (strain 972 / ATCC 24843) (Fission yeast) protein is Valine--tRNA ligase (vas2).